The primary structure comprises 38 residues: Photosystem II reaction center protein L (38 aa).

The helical transmembrane segment at 17-37 (SLYWGLLLIFVLAILFSSYIF) threads the bilayer.

Belongs to the PsbL family. PSII is composed of 1 copy each of membrane proteins PsbA, PsbB, PsbC, PsbD, PsbE, PsbF, PsbH, PsbI, PsbJ, PsbK, PsbL, PsbM, PsbT, PsbX, PsbY, PsbZ, Psb30/Ycf12, at least 3 peripheral proteins of the oxygen-evolving complex and a large number of cofactors. It forms dimeric complexes.

It localises to the plastid. It is found in the chloroplast thylakoid membrane. In terms of biological role, one of the components of the core complex of photosystem II (PSII). PSII is a light-driven water:plastoquinone oxidoreductase that uses light energy to abstract electrons from H(2)O, generating O(2) and a proton gradient subsequently used for ATP formation. It consists of a core antenna complex that captures photons, and an electron transfer chain that converts photonic excitation into a charge separation. This subunit is found at the monomer-monomer interface and is required for correct PSII assembly and/or dimerization. This is Photosystem II reaction center protein L from Mesostigma viride (Green alga).